Consider the following 189-residue polypeptide: Large ribosomal subunit protein uL6 (189 aa).

Belongs to the universal ribosomal protein uL6 family. In terms of assembly, part of the 50S ribosomal subunit.

Functionally, this protein binds to the 23S rRNA, and is important in its secondary structure. It is located near the subunit interface in the base of the L7/L12 stalk, and near the tRNA binding site of the peptidyltransferase center. The sequence is that of Large ribosomal subunit protein uL6 from Bacteroides fragilis (strain ATCC 25285 / DSM 2151 / CCUG 4856 / JCM 11019 / LMG 10263 / NCTC 9343 / Onslow / VPI 2553 / EN-2).